The chain runs to 404 residues: 5-aminolevulinate synthase (404 aa).

The substrate site is built by Arg21 and Ser136. Positions 188, 216, and 244 each coordinate pyridoxal 5'-phosphate. The active site involves Lys247. An N6-(pyridoxal phosphate)lysine modification is found at Lys247. The pyridoxal 5'-phosphate site is built by Thr276 and Thr277. Thr362 provides a ligand contact to substrate.

Belongs to the class-II pyridoxal-phosphate-dependent aminotransferase family. Homodimer. Pyridoxal 5'-phosphate serves as cofactor.

It carries out the reaction succinyl-CoA + glycine + H(+) = 5-aminolevulinate + CO2 + CoA. Its pathway is porphyrin-containing compound metabolism; protoporphyrin-IX biosynthesis; 5-aminolevulinate from glycine: step 1/1. This is 5-aminolevulinate synthase (hemA) from Rhizobium meliloti (strain 1021) (Ensifer meliloti).